The chain runs to 269 residues: Prespore protein Dd31 (269 aa).

The segment covering 1–17 (MEHNNNPGTPQMSSEFP) has biased composition (polar residues). Positions 1–35 (MEHNNNPGTPQMSSEFPASTTQTSSSAAAYDNSSH) are disordered. Low complexity predominate over residues 18–29 (ASTTQTSSSAAA). The next 4 membrane-spanning stretches (helical) occupy residues 111 to 131 (FGIFVFLWEAAALVYNWVVSI), 139 to 159 (VDNFFLALFYMIVGVPTLYFL), 177 to 197 (YAYLMALLGVVLFNIIFFVGF), and 225 to 245 (VSLFFWFVGVFLTIALFIMYL).

Belongs to the SCAMP family.

Its subcellular location is the membrane. It is found in the spore coat. The protein is Prespore protein Dd31 (spiA) of Dictyostelium discoideum (Social amoeba).